The following is a 122-amino-acid chain: Phospholipase A2 crotoxin basic subunit CBd (122 aa).

Cystine bridges form between C26-C115, C28-C44, C43-C95, C49-C122, C50-C88, C57-C81, and C75-C86. Residues Y27, G29, and G31 each coordinate Ca(2+). H47 is a catalytic residue. Residue D48 participates in Ca(2+) binding. The active site involves D89.

It belongs to the phospholipase A2 family. Group II subfamily. D49 sub-subfamily. In terms of assembly, heterodimer of one of the acidic (CA1, CA2, CA3 or CA4) and one of the basic (CBa1, CBa2, CBb, CBc or CBd) subunits; non-covalently linked. The acidic subunit is non-toxic, without enzymatic activity and comprises 3 peptides that are cross-linked by 5 disulfide bridges. The basic subunit is toxic, has phospholipase A2 activity and is composed of a single chain. Multiple variants of each subunit give different crotoxin complexes that can be subdivided into 2 classes: (1) those of high toxicity, low PLA2 activity (CBb, CBc and CBd linked with high affinity to any CA) and high stability (K(d)=4.5 nM) and (2) those of moderate toxicity, high PLA2 activity (CBa2 linked with low affinity to any CA) and low stability (K(d)=25 nM). Interacts with crotoxin inhibitor from Crotalus serum (CICS); the interaction leads to dissociation of the CA-CB heterodimer and to inhibition of PLA2 activity of the CB subunit. Interacts with human NBD1 domain of CFTR. The cofactor is Ca(2+). As to expression, expressed by the venom gland.

It is found in the secreted. It carries out the reaction a 1,2-diacyl-sn-glycero-3-phosphocholine + H2O = a 1-acyl-sn-glycero-3-phosphocholine + a fatty acid + H(+). In terms of biological role, heterodimer CA-CB: Crotoxin is a potent presynaptic neurotoxin that possesses phospholipase A2 (PLA2) activity and exerts a lethal action by blocking neuromuscular transmission. It consists of a non-covalent association of a basic and weakly toxic PLA2 subunit (CBa2, CBb, CBc, or CBd), with a small acidic, non-enzymatic and non-toxic subunit (CA1, CA2, CA3 or CA4). The complex acts by binding to a specific 48-kDa protein (R48) receptor located on presynaptic membranes, forming a transient ternary complex CA-CB-R48, followed by dissociation of the CA-CB complex and release of the CA subunit. At equilibrium, only the CB subunits remain associated with the specific crotoxin receptor. In addition to neurotoxicity, crotoxin has been found to exert myotoxicity, nephrotoxicity, and cardiovascular toxicity. Moreover, anti-inflammatory, immunomodulatory, anti-tumor and analgesic effects of crotoxin have also been reported. Monomer CBd: The basic subunit of crotoxin is a snake venom phospholipase A2 (PLA2) that exhibits weak neurotoxicity (10-fold less than the heterodimer) and very strong anticoagulant effects by binding to factor Xa (F10) and inhibiting the prothrombinase activity. In addition, it shows the same effects described for the heterodimer and binds the nucleotide-binding domain (NBD1) of CFTR chloride channels and increases the channel current. PLA2 catalyzes the calcium-dependent hydrolysis of the 2-acyl groups in 3-sn-phosphoglycerides. This is Phospholipase A2 crotoxin basic subunit CBd from Crotalus durissus terrificus (South American rattlesnake).